The sequence spans 285 residues: DegV domain-containing protein CA_C3284 (285 aa).

One can recognise a DegV domain in the interval 3–280; the sequence is VKILTDSTSC…PGAIGIAYYT (278 aa). The hexadecanoate site is built by serine 59 and serine 91.

Functionally, may bind long-chain fatty acids, such as palmitate, and may play a role in lipid transport or fatty acid metabolism. This is DegV domain-containing protein CA_C3284 from Clostridium acetobutylicum (strain ATCC 824 / DSM 792 / JCM 1419 / IAM 19013 / LMG 5710 / NBRC 13948 / NRRL B-527 / VKM B-1787 / 2291 / W).